We begin with the raw amino-acid sequence, 245 residues long: 5-oxoprolinase subunit A (245 aa).

Belongs to the LamB/PxpA family. Forms a complex composed of PxpA, PxpB and PxpC.

The catalysed reaction is 5-oxo-L-proline + ATP + 2 H2O = L-glutamate + ADP + phosphate + H(+). Functionally, catalyzes the cleavage of 5-oxoproline to form L-glutamate coupled to the hydrolysis of ATP to ADP and inorganic phosphate. This Yersinia enterocolitica serotype O:8 / biotype 1B (strain NCTC 13174 / 8081) protein is 5-oxoprolinase subunit A.